A 351-amino-acid chain; its full sequence is Photosystem II D2 protein (351 aa).

The chain crosses the membrane as a helical span at residues 39–59 (CAFLALGGWLTGTTFVTSWYT). His-116 contacts chlorophyll a. The chain crosses the membrane as a helical span at residues 123 to 139 (GFMLRQFEIARLVGIRP). Gln-128 and Asn-141 together coordinate pheophytin a. Residues 151 to 164 (VFVSVFLMYPLGQS) form a helical membrane-spanning segment. His-196 is a chlorophyll a binding site. The chain crosses the membrane as a helical span at residues 206-226 (GALLCAIHGATVENTLFEDGD). A plastoquinone is bound by residues His-213 and Phe-260. Fe cation is bound at residue His-213. His-267 is a Fe cation binding site. The helical transmembrane segment at 277 to 293 (GLWMSAVGIVGLALNLR) threads the bilayer.

This sequence belongs to the reaction center PufL/M/PsbA/D family. In terms of assembly, PSII is composed of 1 copy each of membrane proteins PsbA, PsbB, PsbC, PsbD, PsbE, PsbF, PsbH, PsbI, PsbJ, PsbK, PsbL, PsbM, PsbT, PsbX, PsbY, PsbZ, Psb30/Ycf12, peripheral proteins PsbO, CyanoQ (PsbQ), PsbU, PsbV and a large number of cofactors. It forms dimeric complexes. Requires The D1/D2 heterodimer binds P680, chlorophylls that are the primary electron donor of PSII, and subsequent electron acceptors. It shares a non-heme iron and each subunit binds pheophytin, quinone, additional chlorophylls, carotenoids and lipids. There is also a Cl(-1) ion associated with D1 and D2, which is required for oxygen evolution. The PSII complex binds additional chlorophylls, carotenoids and specific lipids. as cofactor.

It localises to the cellular thylakoid membrane. It carries out the reaction 2 a plastoquinone + 4 hnu + 2 H2O = 2 a plastoquinol + O2. In terms of biological role, photosystem II (PSII) is a light-driven water:plastoquinone oxidoreductase that uses light energy to abstract electrons from H(2)O, generating O(2) and a proton gradient subsequently used for ATP formation. It consists of a core antenna complex that captures photons, and an electron transfer chain that converts photonic excitation into a charge separation. The D1/D2 (PsbA/PsbD) reaction center heterodimer binds P680, the primary electron donor of PSII as well as several subsequent electron acceptors. D2 is needed for assembly of a stable PSII complex. The polypeptide is Photosystem II D2 protein (Nostoc punctiforme (strain ATCC 29133 / PCC 73102)).